Consider the following 230-residue polypeptide: U2 small nuclear ribonucleoprotein A' (230 aa).

LRR repeat units lie at residues 15–36 (SLRNNIFTNNSITKNMRLNADT), 48–69 (GDRELNLRGLQIPVIENLGVTE), 71–92 (HYTSLDLSDNEIRVMGGFPRLE), 93–114 (TLRTLLLSKNRITQINDVKNIA), and 115–136 (KLETLVLTQNGIATLGALESLK). The LRRCT domain maps to 149 to 187 (NPVQHVPRYRSYMISILPSLRMLDFQRVTQKERDEAEAM).

It belongs to the U2 small nuclear ribonucleoprotein A family. Associated with the spliceosome.

It localises to the nucleus. In terms of biological role, involved in pre-mRNA splicing. This Yarrowia lipolytica (strain CLIB 122 / E 150) (Yeast) protein is U2 small nuclear ribonucleoprotein A' (LEA1).